A 1113-amino-acid polypeptide reads, in one-letter code: Carbamoyl phosphate synthase arginine-specific large chain (1113 aa).

The segment at 23 to 420 (QLIKGIDSVL…AFQKAFRQVD (398 aa)) is carboxyphosphate synthetic domain. R150, R190, G196, G197, K227, L229, E234, G260, I261, H262, Q303, and E317 together coordinate ATP. An ATP-grasp 1 domain is found at 154 to 346 (ARALKEINMP…LAYTAAKIAL (193 aa)). Mg(2+) is bound by residues Q303, E317, and N319. The Mn(2+) site is built by Q303, E317, and N319. Residues 421 to 568 (PSLLGFQGSD…YVTYNAVKDD (148 aa)) are oligomerization domain. Positions 569–955 (VTFGDNGIMV…SYWVALQGLM (387 aa)) are carbamoyl phosphate synthetic domain. The ATP-grasp 2 domain occupies 693–888 (STILDTLGLD…FVEIAVKAFL (196 aa)). Residues R729, K768, I770, E775, G800, V801, H802, S803, Q843, and E859 each coordinate ATP. Mg(2+) is bound by residues Q843, E859, and N861. Mn(2+)-binding residues include Q843, E859, and N861. Residues 956–1097 (SFCVPLPPSG…EMRQSDGPET (142 aa)) form an allosteric domain region. The MGS-like domain occupies 957 to 1113 (FCVPLPPSGI…WREYLGFKPT (157 aa)).

It belongs to the CarB family. As to quaternary structure, heterodimer composed of 2 chains; the small (or glutamine) chain promotes the hydrolysis of glutamine to ammonia, which is used by the large (or ammonia) chain to synthesize carbamoyl phosphate. Mg(2+) serves as cofactor. Requires Mn(2+) as cofactor.

Its subcellular location is the cytoplasm. The catalysed reaction is hydrogencarbonate + L-glutamine + 2 ATP + H2O = carbamoyl phosphate + L-glutamate + 2 ADP + phosphate + 2 H(+). It carries out the reaction hydrogencarbonate + NH4(+) + 2 ATP = carbamoyl phosphate + 2 ADP + phosphate + 2 H(+). Its pathway is amino-acid biosynthesis; L-arginine biosynthesis; carbamoyl phosphate from bicarbonate: step 1/1. Large subunit of the arginine-specific carbamoyl phosphate synthase (CPSase). CPSase catalyzes the formation of carbamoyl phosphate from the ammonia moiety of glutamine, hydrogencarbonate, and phosphate donated by ATP, constituting the first step of 2 biosynthetic pathways, one leading to arginine and/or urea and the other to pyrimidine nucleotides. The large subunit (synthetase) binds the substrates ammonia (free or transferred from glutamine from the small subunit), hydrogencarbonate and ATP and carries out an ATP-coupled ligase reaction, activating hydrogencarbonate by forming carboxy phosphate which reacts with ammonia to form carbamoyl phosphate. The sequence is that of Carbamoyl phosphate synthase arginine-specific large chain (CPA2) from Eremothecium gossypii (strain ATCC 10895 / CBS 109.51 / FGSC 9923 / NRRL Y-1056) (Yeast).